The chain runs to 1531 residues: La-related protein Larp4B (1531 aa).

A compositionally biased stretch (low complexity) spans 112-147 (HTHVAHQQQQQQQQQTIQQHLHQQQQQQSPHPAQHL). Disordered regions lie at residues 112–148 (HTHV…QHLT) and 239–263 (QLPA…EPNI). The HTH La-type RNA-binding domain maps to 262 to 351 (NIPLDKLKQM…RPNRKRCIII (90 aa)). The RRM domain maps to 348 to 423 (CIIILREISN…KPIMARIKPK (76 aa)). Disordered stretches follow at residues 533-605 (PLPP…QGGN), 710-736 (AHSH…ASSS), 748-768 (TAPA…QQTQ), 791-1135 (QEAG…SNQQ), 1160-1211 (DVVR…TPAL), and 1251-1285 (ASSK…QPSQ). Over residues 565–578 (YNNNHRGNPNNVGG) the composition is skewed to low complexity. Low complexity-rich tracts occupy residues 754–768 (QPGQ…QQTQ) and 810–826 (SSNM…TSMS). A compositionally biased stretch (polar residues) spans 860-884 (SSPSNPHPQQHLMSSSTGSNVQSAG). Residues 945–959 (ALSSQQQQHHLTTGT) show a composition bias toward low complexity. Basic residues predominate over residues 966–975 (HHYHHHHHHN). The span at 983–1004 (NSGGLGVSSGGSGGGGSGGGSG) shows a compositional bias: gly residues. Over residues 1031–1045 (HQQQQQQQQQQQQQQ) the composition is skewed to low complexity. Polar residues predominate over residues 1068–1086 (TSATAPHTPQATGGASLHN). Positions 1087 to 1115 (STTSSSSSTGLGQKQTLHQQQQQAPQQHQ) are enriched in low complexity. S1123 carries the post-translational modification Phosphoserine. Positions 1164–1173 (TGGGGGGGGK) are enriched in gly residues. A compositionally biased stretch (polar residues) spans 1183 to 1200 (PQGQNQPHMAPNYQQHQP). A compositionally biased stretch (basic and acidic residues) spans 1270 to 1280 (KSNKTEDEMHP). S1370 and S1413 each carry phosphoserine. Disordered regions lie at residues 1393–1418 (KAAA…TGSH) and 1450–1531 (GGAS…ANNS). 2 stretches are compositionally biased toward polar residues: residues 1467-1477 (ATNTTQGSSAV) and 1502-1515 (QHYG…TNAN).

In terms of biological role, probable RNA binding protein. Negatively regulates myc at the protein level, via an unknown mechanism, and may therefore have a role in growth. Has no effect on myc mRNA levels. The sequence is that of La-related protein Larp4B from Drosophila melanogaster (Fruit fly).